The following is a 254-amino-acid chain: Tumor necrosis factor ligand superfamily member 9 (254 aa).

The Cytoplasmic portion of the chain corresponds to 1-28; it reads MEYASDASLDPEAPWPPAPRARACRVLP. A helical; Signal-anchor for type II membrane protein membrane pass occupies residues 29–49; the sequence is WALVAGLLLLLLLAAACAVFL. At 50-254 the chain is on the extracellular side; sequence ACPWAVSGAR…PAGLPSPRSE (205 aa). The region spanning 91–240 is the THD domain; sequence MFAQLVAQNV…GATVLGLFRV (150 aa).

It belongs to the tumor necrosis factor family. Homotrimer. Expressed in brain, placenta, lung, skeletal muscle and kidney.

The protein resides in the membrane. Functionally, cytokine that binds to TNFRSF9. Induces the proliferation of activated peripheral blood T-cells. May have a role in activation-induced cell death (AICD). May play a role in cognate interactions between T-cells and B-cells/macrophages. In Homo sapiens (Human), this protein is Tumor necrosis factor ligand superfamily member 9 (TNFSF9).